A 1029-amino-acid polypeptide reads, in one-letter code: Endosome/lysosome-associated apoptosis and autophagy regulator family member 2 (1029 aa).

Residues 1 to 47 (MLFRARGPVRGRGWGRPAEAPRRGRSPPWSPAWICCWALAGCQAAWA) form the signal peptide. Residues 48–929 (GDLPSSSSRP…TCETVDFWLK (882 aa)) lie on the Extracellular side of the membrane. Asn169 carries N-linked (GlcNAc...) asparagine glycosylation. 3 disulfide bridges follow: Cys293/Cys310, Cys323/Cys346, and Cys326/Cys358. 2 N-linked (GlcNAc...) asparagine glycosylation sites follow: Asn405 and Asn691. In terms of domain architecture, MRH spans 672 to 877 (SDCFFYHEKE…LWESAEACPL (206 aa)). 4 disulfides stabilise this stretch: Cys674/Cys720, Cys730/Cys758, Cys827/Cys863, and Cys839/Cys875. Residues 930–950 (VGAGVGAFTAVLLVALTCYFW) traverse the membrane as a helical segment. The Cytoplasmic portion of the chain corresponds to 951 to 1029 (KKNQKLEYKY…QLKTSRSPNI (79 aa)). The residue at position 1018 (Ser1018) is a Phosphoserine.

Belongs to the ELAPOR family.

The protein resides in the cell membrane. Functions as a regulator of the BMP signaling pathway and may be involved in epidermal differentiation. This chain is Endosome/lysosome-associated apoptosis and autophagy regulator family member 2, found in Homo sapiens (Human).